The chain runs to 355 residues: Eukaryotic initiation factor 4A-13 (355 aa).

Positions 40 to 68 (DSFDAMGLQENLLRGIYAYGFEKPSAIQQ) match the Q motif motif. In terms of domain architecture, Helicase ATP-binding spans 71-241 (IVPFCKGLDV…RKFMNQPVRI (171 aa)). 84-91 (AQSGTGKT) is a binding site for ATP. Positions 189-192 (DEAD) match the DEAD box motif. Positions 252 to 355 (GIKQFYVNVD…QQVSLVINYD (104 aa)) constitute a Helicase C-terminal domain.

It belongs to the DEAD box helicase family. eIF4A subfamily. As to quaternary structure, eIF4F is a multi-subunit complex, the composition of which varies with external and internal environmental conditions. It is composed of at least EIF4A, EIF4E and EIF4G.

The catalysed reaction is ATP + H2O = ADP + phosphate + H(+). Functionally, ATP-dependent RNA helicase which is a subunit of the eIF4F complex involved in cap recognition and is required for mRNA binding to ribosome. In the current model of translation initiation, eIF4A unwinds RNA secondary structures in the 5'-UTR of mRNAs which is necessary to allow efficient binding of the small ribosomal subunit, and subsequent scanning for the initiator codon. This Nicotiana tabacum (Common tobacco) protein is Eukaryotic initiation factor 4A-13.